The primary structure comprises 422 residues: Replication factor C large subunit (422 aa).

G63–T70 contributes to the ATP binding site.

This sequence belongs to the activator 1 small subunits family. RfcL subfamily. Heteromultimer composed of small subunits (RfcS) and large subunits (RfcL).

Functionally, part of the RFC clamp loader complex which loads the PCNA sliding clamp onto DNA. This chain is Replication factor C large subunit, found in Pyrobaculum neutrophilum (strain DSM 2338 / JCM 9278 / NBRC 100436 / V24Sta) (Thermoproteus neutrophilus).